Consider the following 319-residue polypeptide: Heavy metal-associated isoprenylated plant protein 9 (319 aa).

Basic and acidic residues-rich tracts occupy residues 1-11 and 24-45; these read MGEEVKPEAKE and EEKK…KPKE. Residues 1-57 are disordered; that stretch reads MGEEVKPEAKEAASAPQAVPAEEEEKKKDVAEEKKVAAEEEKPKEEEEPQPPPPPPP. A coiled-coil region spans residues 21–48; it reads AEEEEKKKDVAEEKKVAAEEEKPKEEEE. 2 consecutive HMA domains span residues 55-118 and 144-208; these read PPPF…KRMA and LTTV…KQAR. Cys-66, Cys-69, Cys-155, and Cys-158 together coordinate a metal cation. The segment at 207-282 is disordered; the sequence is ARIVPQPDPE…RDNEMTAMAQ (76 aa). Over residues 224–254 the composition is skewed to basic and acidic residues; it reads QEEKKEESGEGNEKPPETGEEKEEEKKKEGE. Residues 255–268 show a composition bias toward acidic residues; that stretch reads ENGEEGGGEEAAAT. The residue at position 316 (Cys-316) is a Cysteine methyl ester. Residue Cys-316 is the site of S-farnesyl cysteine attachment. Residues 317–319 constitute a propeptide, removed in mature form; the sequence is CIS.

Belongs to the HIPP family.

Heavy-metal-binding protein. This Arabidopsis thaliana (Mouse-ear cress) protein is Heavy metal-associated isoprenylated plant protein 9.